We begin with the raw amino-acid sequence, 89 residues long: Small ribosomal subunit protein uS15 (89 aa).

A compositionally biased stretch (basic and acidic residues) spans 1 to 21 (MSIAAERKAEVIKTNARKDGD). A disordered region spans residues 1-24 (MSIAAERKAEVIKTNARKDGDTGS).

The protein belongs to the universal ribosomal protein uS15 family. Part of the 30S ribosomal subunit. Forms a bridge to the 50S subunit in the 70S ribosome, contacting the 23S rRNA.

Its function is as follows. One of the primary rRNA binding proteins, it binds directly to 16S rRNA where it helps nucleate assembly of the platform of the 30S subunit by binding and bridging several RNA helices of the 16S rRNA. Functionally, forms an intersubunit bridge (bridge B4) with the 23S rRNA of the 50S subunit in the ribosome. This chain is Small ribosomal subunit protein uS15, found in Rhodopseudomonas palustris (strain BisA53).